Here is a 202-residue protein sequence, read N- to C-terminus: Twist-related protein 1 (202 aa).

Residues 1-18 (MMQDVSSSPVSPADDSLS) show a composition bias toward low complexity. Residues 1 to 105 (MMQDVSSSPV…GGGSPQSYEE (105 aa)) form a disordered region. A compositionally biased stretch (basic residues) spans 34–43 (RGGRKRRSSR). 2 stretches are compositionally biased toward gly residues: residues 46 to 65 (AGGGAGPGGAAGGGVGGGDE) and 80 to 99 (GCGGGGGAGGGGGSSSGGGS). Residues 108 to 159 (TQRVMANVRERQRTQSLNEAFAALRKIIPTLPSDKLSKIQTLKLAARYIDFL) enclose the bHLH domain. Residues 161 to 191 (QVLQSDELDSKMASCSYVAHERLSYAFSVWR) are sufficient for transactivation activity.

Efficient DNA binding requires dimerization with another bHLH protein. Homodimer or heterodimer with E proteins such as TCF3. ID1 binds preferentially to TCF3 but does not interact efficiently with TWIST1 so ID1 levels control the amount of TCF3 available to dimerize with TWIST1 and thus determine the type of dimer formed. Subset of mesodermal cells.

It localises to the nucleus. Its function is as follows. Acts as a transcriptional regulator. Inhibits myogenesis by sequestrating E proteins, inhibiting trans-activation by MEF2, and inhibiting DNA-binding by MYOD1 through physical interaction. This interaction probably involves the basic domains of both proteins. Also represses expression of pro-inflammatory cytokines such as TNFA and IL1B. Regulates cranial suture patterning and fusion. Activates transcription as a heterodimer with E proteins. Regulates gene expression differentially, depending on dimer composition. Homodimers induce expression of FGFR2 and POSTN while heterodimers repress FGFR2 and POSTN expression and induce THBS1 expression. Heterodimerization is also required for osteoblast differentiation. Represses the activity of the circadian transcriptional activator: NPAS2-BMAL1 heterodimer. The sequence is that of Twist-related protein 1 (TWIST1) from Homo sapiens (Human).